Here is a 202-residue protein sequence, read N- to C-terminus: Imidazoleglycerol-phosphate dehydratase (202 aa).

Belongs to the imidazoleglycerol-phosphate dehydratase family.

It is found in the cytoplasm. The enzyme catalyses D-erythro-1-(imidazol-4-yl)glycerol 3-phosphate = 3-(imidazol-4-yl)-2-oxopropyl phosphate + H2O. It participates in amino-acid biosynthesis; L-histidine biosynthesis; L-histidine from 5-phospho-alpha-D-ribose 1-diphosphate: step 6/9. The chain is Imidazoleglycerol-phosphate dehydratase from Rhizobium johnstonii (strain DSM 114642 / LMG 32736 / 3841) (Rhizobium leguminosarum bv. viciae).